A 124-amino-acid polypeptide reads, in one-letter code: Salivary protein 15 Iric-3 (124 aa).

The N-terminal stretch at 1-22 (MESFVAMKVVCIILLFVIAAEA) is a signal peptide. 2 N-linked (GlcNAc...) asparagine glycosylation sites follow: Asn82 and Asn93. Residues 105–124 (GPNNQTCHKKDECVGYIPGC) form a CD4-binding region.

It belongs to the salp15 family. As to quaternary structure, interacts with host CD4. Interacts with host DC-SIGN (CD209). Interacts with Borrelia outer surface protein C (OspC). In terms of tissue distribution, expressed in salivary glands. Detected in fed adult female.

The protein localises to the secreted. In terms of biological role, salivary tick protein that downregulates host immune system by binding to both dendritic cells, and CD4(+) T cells. Specifically binds to the CD4 coreceptor on T cells. This interaction prevents the activation of the Src kinase, Lck, and its downstream substrate Zap-70, and results in deficient activation of PLCgamma1, the repression of calcium fluxes triggered by T-cell antigen receptor (TCR) ligation, and a subsequent reduction in interleukin-2 production. This salivary protein also binds to DC-SIGN (CD209) on dendritic cells (DC) and activates the Raf-1 kinase/MEK signaling pathway that results in down-regulating expression of pro-inflammatory cytokines. Furthermore, it inhibits T cell proliferation induced by DCs. In addition, it inhibits in vitro keratinocyte inflammation induced by Borrelia burgdorferi or by the major outer surface protein (OspC) of Borrelia. In addition, it downregulates chemokines and monocyte chemoattractant protein 1, as well as several antimicrobial peptides such as defensins, cathelicidin, psoriasin, and RNase 7. Apart from its immunomodulatory activities, it is also associated with protection of Borrelia spirochetes from antibody-mediated killing through its binding to OspC. In vivo, tests on different immune disease animal models show promising therapeutic results, e.g., in inhibiting HIV infection, experimental autoimmune encephalomyelitis, transplantation rejection, and asthma. In Ixodes ricinus (Common tick), this protein is Salivary protein 15 Iric-3.